Here is a 496-residue protein sequence, read N- to C-terminus: Lysine--tRNA ligase (496 aa).

Positions 409 and 416 each coordinate Mg(2+).

It belongs to the class-II aminoacyl-tRNA synthetase family. As to quaternary structure, homodimer. It depends on Mg(2+) as a cofactor.

It localises to the cytoplasm. The catalysed reaction is tRNA(Lys) + L-lysine + ATP = L-lysyl-tRNA(Lys) + AMP + diphosphate. The protein is Lysine--tRNA ligase of Streptococcus thermophilus (strain ATCC BAA-491 / LMD-9).